Reading from the N-terminus, the 289-residue chain is Probable WRKY transcription factor 38 (289 aa).

A disordered region spans residues 62–103 (PETEDDQFSDLSSRDSSPPPQGSPSKKRKIDSTNSSENWRDD). The segment at residues 104–172 (SPDPIYYDGY…YFGHHTCKTE (69 aa)) is a DNA-binding region (WRKY). The segment covering 249-266 (LSSPSGSYPPSSSSGSES) has biased composition (low complexity). Residues 249–278 (LSSPSGSYPPSSSSGSESADFNSDLLFDNP) form a disordered region.

The protein belongs to the WRKY group III family.

Its subcellular location is the nucleus. Functionally, transcription factor. Interacts specifically with the W box (5'-(T)TGAC[CT]-3'), a frequently occurring elicitor-responsive cis-acting element. The sequence is that of Probable WRKY transcription factor 38 (WRKY38) from Arabidopsis thaliana (Mouse-ear cress).